Here is a 216-residue protein sequence, read N- to C-terminus: Somatotropin (216 aa).

The signal sequence occupies residues 1–26 (MATGSQTSWLLTFTLLCLPWPQEAGA). Position 45 (H45) interacts with Zn(2+). C78 and C189 are oxidised to a cystine. S131 is modified (phosphoserine). E198 contributes to the Zn(2+) binding site. A disulfide bridge links C206 with C214.

Belongs to the somatotropin/prolactin family.

Its subcellular location is the secreted. Its function is as follows. Plays an important role in growth control. Its major role in stimulating body growth is to stimulate the liver and other tissues to secrete IGF1. It stimulates both the differentiation and proliferation of myoblasts. It also stimulates amino acid uptake and protein synthesis in muscle and other tissues. The sequence is that of Somatotropin (GH1) from Spalax ehrenbergi (Middle East blind mole rat).